The sequence spans 161 residues: Ribosome maturation factor RimP (161 aa).

Belongs to the RimP family.

It is found in the cytoplasm. Its function is as follows. Required for maturation of 30S ribosomal subunits. The polypeptide is Ribosome maturation factor RimP (Janthinobacterium sp. (strain Marseille) (Minibacterium massiliensis)).